A 227-amino-acid chain; its full sequence is tRNA (guanine-N(7)-)-methyltransferase (227 aa).

4 residues coordinate S-adenosyl-L-methionine: glutamate 57, glutamate 82, aspartate 109, and aspartate 132. Aspartate 132 is a catalytic residue. Substrate is bound by residues lysine 136, aspartate 168, and threonine 205–glutamate 208.

The protein belongs to the class I-like SAM-binding methyltransferase superfamily. TrmB family.

The enzyme catalyses guanosine(46) in tRNA + S-adenosyl-L-methionine = N(7)-methylguanosine(46) in tRNA + S-adenosyl-L-homocysteine. Its pathway is tRNA modification; N(7)-methylguanine-tRNA biosynthesis. Its function is as follows. Catalyzes the formation of N(7)-methylguanine at position 46 (m7G46) in tRNA. The protein is tRNA (guanine-N(7)-)-methyltransferase of Leifsonia xyli subsp. xyli (strain CTCB07).